Consider the following 272-residue polypeptide: MKTVSQLIDMKQKQTKISMVTAYDFPSAKQVEAAGIDMILVGDSLGMTVLGYESIVQVTLADMIHHGRAVRRGAPNTFVVVDMPIGAVGISMTQDLNHALKLYQETNANAIKAEGAHITPFIEKATAIGIPVVAHLGLTPQSVGVMGYKLQGATKEAAEQLILDAKNVEQAGAVALVLEAIPNDLAEEISKHLTIPVIGIGAGKGTDGQVLVYHDMLNYGVEHKAKFVKQFADFSVGVDGLKQYDQEVKSGAFPSEEYTYKKKIMNEVNNND.

Positions 43 and 82 each coordinate Mg(2+). 3-methyl-2-oxobutanoate contacts are provided by residues 43 to 44 (DS), Asp-82, and Lys-112. Glu-114 contributes to the Mg(2+) binding site. Glu-179 acts as the Proton acceptor in catalysis.

It belongs to the PanB family. Homodecamer; pentamer of dimers. Mg(2+) is required as a cofactor.

Its subcellular location is the cytoplasm. The enzyme catalyses 3-methyl-2-oxobutanoate + (6R)-5,10-methylene-5,6,7,8-tetrahydrofolate + H2O = 2-dehydropantoate + (6S)-5,6,7,8-tetrahydrofolate. The protein operates within cofactor biosynthesis; (R)-pantothenate biosynthesis; (R)-pantoate from 3-methyl-2-oxobutanoate: step 1/2. In terms of biological role, catalyzes the reversible reaction in which hydroxymethyl group from 5,10-methylenetetrahydrofolate is transferred onto alpha-ketoisovalerate to form ketopantoate. In Staphylococcus aureus (strain Newman), this protein is 3-methyl-2-oxobutanoate hydroxymethyltransferase.